A 426-amino-acid chain; its full sequence is 5-aminovalerate aminotransferase DavT (426 aa).

Residues 112–113, Tyr139, and 240–243 contribute to the pyridoxal 5'-phosphate site; these read GS and DEVQ. At Lys269 the chain carries N6-(pyridoxal phosphate)lysine. Thr298 lines the pyridoxal 5'-phosphate pocket.

Belongs to the class-III pyridoxal-phosphate-dependent aminotransferase family. Requires pyridoxal 5'-phosphate as cofactor.

The catalysed reaction is 5-aminopentanoate + 2-oxoglutarate = 5-oxopentanoate + L-glutamate. Functionally, catalyzes the conversion of 5-aminovalerate to 5-oxopentanoate. This is 5-aminovalerate aminotransferase DavT (davT) from Pseudomonas aeruginosa (strain ATCC 15692 / DSM 22644 / CIP 104116 / JCM 14847 / LMG 12228 / 1C / PRS 101 / PAO1).